The sequence spans 434 residues: ATP phosphoribosyltransferase regulatory subunit (434 aa).

It belongs to the class-II aminoacyl-tRNA synthetase family. HisZ subfamily. As to quaternary structure, heteromultimer composed of HisG and HisZ subunits.

Its subcellular location is the cytoplasm. It functions in the pathway amino-acid biosynthesis; L-histidine biosynthesis; L-histidine from 5-phospho-alpha-D-ribose 1-diphosphate: step 1/9. Its function is as follows. Required for the first step of histidine biosynthesis. May allow the feedback regulation of ATP phosphoribosyltransferase activity by histidine. This Geobacter metallireducens (strain ATCC 53774 / DSM 7210 / GS-15) protein is ATP phosphoribosyltransferase regulatory subunit.